The chain runs to 369 residues: S-adenosylmethionine:tRNA ribosyltransferase-isomerase (369 aa).

It belongs to the QueA family. In terms of assembly, monomer.

Its subcellular location is the cytoplasm. The enzyme catalyses 7-aminomethyl-7-carbaguanosine(34) in tRNA + S-adenosyl-L-methionine = epoxyqueuosine(34) in tRNA + adenine + L-methionine + 2 H(+). It functions in the pathway tRNA modification; tRNA-queuosine biosynthesis. In terms of biological role, transfers and isomerizes the ribose moiety from AdoMet to the 7-aminomethyl group of 7-deazaguanine (preQ1-tRNA) to give epoxyqueuosine (oQ-tRNA). This is S-adenosylmethionine:tRNA ribosyltransferase-isomerase from Synechococcus sp. (strain CC9311).